Reading from the N-terminus, the 514-residue chain is Probable type III restriction-modification enzyme HindVIP Res subunit (514 aa).

Belongs to the type III restriction-modification system Res protein family. Contains two different subunits: Res and Mod. Mg(2+) is required as a cofactor. It depends on S-adenosyl-L-methionine as a cofactor.

The enzyme catalyses Endonucleolytic cleavage of DNA to give specific double-stranded fragments with terminal 5'-phosphates.. Functionally, a type III restriction enzyme that recognizes 2 inversely oriented double-stranded sequences 5'-CGAAT-3' and cleaves 25-27 base pairs downstream. After binding to one recognition site undergoes random one-dimensional diffusion along DNA until it collides with a stationary enzyme bound to the second DNA site, which is when DNA cleavage occurs. DNA restriction requires both the Res and Mod subunits. This Haemophilus influenzae (strain ATCC 51907 / DSM 11121 / KW20 / Rd) protein is Probable type III restriction-modification enzyme HindVIP Res subunit.